The primary structure comprises 353 residues: Glutamine synthetase cytosolic isozyme 1-5 (353 aa).

An N-acetylthreonine modification is found at T2. S3 carries the phosphoserine modification. Residues 19–99 (IIAEYIWIGG…VMCDAYRPAG (81 aa)) form the GS beta-grasp domain. Residues 106 to 353 (NRHKAVKIFD…TSMIAETTIL (248 aa)) form the GS catalytic domain.

Belongs to the glutamine synthetase family. As to quaternary structure, homooctamer. Not expressed in roots.

Its subcellular location is the cytoplasm. It carries out the reaction L-glutamate + NH4(+) + ATP = L-glutamine + ADP + phosphate + H(+). In Arabidopsis thaliana (Mouse-ear cress), this protein is Glutamine synthetase cytosolic isozyme 1-5 (GLN1-5).